A 283-amino-acid chain; its full sequence is MAGRPLHAFEVVATRHLAPHMVRVVLGGSGFDTFVPSDFTDSYIKLVFVDDDVDVGRLPRPLTLDSFADLPTAKRPPVRTMTVRHVDAAAREIAVDIVLHGEHGVAGPWAAGAQRGQPIYLMGPGGAYAPDPAADWHLLAGDESAIPAIAAALEALPPDAIGRAFIEVAGPDDEIGLTAPDAVEVNWVYRGGRADLVPEDRAGDHAPLIEAVTTTAWLPGQVHVFIHGEAQAVMHNLRPYVRNERGVDAKWASSISGYWRRGRTEEMFRKWKKELAEAEAGTH.

The FAD-binding FR-type domain occupies 4-131; it reads RPLHAFEVVA…MGPGGAYAPD (128 aa).

This is an uncharacterized protein from Mycobacterium bovis (strain ATCC BAA-935 / AF2122/97).